We begin with the raw amino-acid sequence, 76 residues long: Exodeoxyribonuclease 7 small subunit (76 aa).

Belongs to the XseB family. As to quaternary structure, heterooligomer composed of large and small subunits.

Its subcellular location is the cytoplasm. It carries out the reaction Exonucleolytic cleavage in either 5'- to 3'- or 3'- to 5'-direction to yield nucleoside 5'-phosphates.. Its function is as follows. Bidirectionally degrades single-stranded DNA into large acid-insoluble oligonucleotides, which are then degraded further into small acid-soluble oligonucleotides. This chain is Exodeoxyribonuclease 7 small subunit, found in Legionella pneumophila subsp. pneumophila (strain Philadelphia 1 / ATCC 33152 / DSM 7513).